Here is a 295-residue protein sequence, read N- to C-terminus: Cutinase 11 (295 aa).

Residues 1 to 17 (MQTSALLLAAQALVASA) form the signal peptide. Residues Cys25 and Cys102 are joined by a disulfide bond. Catalysis depends on residues Ser113, Asp198, and His210. Cysteines 184 and 202 form a disulfide. The segment at 228–258 (KLNSGGSPPTTPPTTPPTTPPTTPPTTPPPS) is disordered. The span at 236–258 (PTTPPTTPPTTPPTTPPTTPPPS) shows a compositional bias: pro residues. Positions 260 to 295 (SCAALYGQCGGQGWNGATCCSQGTCRASNQWYSQCL) constitute a CBM1 domain.

This sequence belongs to the cutinase family. Post-translationally, the 2 disulfide bonds play a critical role in holding the catalytic residues in juxta-position; reduction of the disulfide bridges results in the complete inactivation of the enzyme.

It is found in the secreted. It catalyses the reaction cutin + H2O = cutin monomers.. Functionally, catalyzes the hydrolysis of complex carboxylic polyesters found in the cell wall of plants. May degrade cutin, a macromolecule that forms the structure of the plant cuticle. May also degrade suberin, a specialized macromolecule found in the cell wall of various plant tissues. Allows pathogenic fungi to penetrate through the cuticular barrier into the host plant during the initial stage of fungal infection. Involved in pathogenesis. The sequence is that of Cutinase 11 from Verticillium dahliae (Verticillium wilt).